Reading from the N-terminus, the 307-residue chain is Aspartate carbamoyltransferase catalytic subunit (307 aa).

2 residues coordinate carbamoyl phosphate: Arg-54 and Thr-55. Lys-83 is an L-aspartate binding site. 3 residues coordinate carbamoyl phosphate: Arg-104, His-132, and Gln-135. Positions 165 and 228 each coordinate L-aspartate. Carbamoyl phosphate-binding residues include Leu-267 and Pro-268.

The protein belongs to the aspartate/ornithine carbamoyltransferase superfamily. ATCase family. In terms of assembly, heterododecamer (2C3:3R2) of six catalytic PyrB chains organized as two trimers (C3), and six regulatory PyrI chains organized as three dimers (R2).

It carries out the reaction carbamoyl phosphate + L-aspartate = N-carbamoyl-L-aspartate + phosphate + H(+). Its pathway is pyrimidine metabolism; UMP biosynthesis via de novo pathway; (S)-dihydroorotate from bicarbonate: step 2/3. Functionally, catalyzes the condensation of carbamoyl phosphate and aspartate to form carbamoyl aspartate and inorganic phosphate, the committed step in the de novo pyrimidine nucleotide biosynthesis pathway. The sequence is that of Aspartate carbamoyltransferase catalytic subunit from Clostridium acetobutylicum (strain ATCC 824 / DSM 792 / JCM 1419 / IAM 19013 / LMG 5710 / NBRC 13948 / NRRL B-527 / VKM B-1787 / 2291 / W).